The following is a 167-amino-acid chain: Gametocyte-specific factor 1 (167 aa).

Ser-8 carries the post-translational modification Phosphoserine. 2 CHHC U11-48K-type zinc fingers span residues 14–41 (LLQC…RKNH) and 48–75 (LATC…DDRS). Residues Cys-17, His-23, His-33, Cys-37, Cys-51, His-57, His-67, and Cys-71 each coordinate Zn(2+).

The protein belongs to the UPF0224 (FAM112) family.

It localises to the cytoplasm. Functionally, required for spermatogenesis and is involved in the suppression of retrotransposon transcription in male germ cells. The protein is Gametocyte-specific factor 1 (GTSF1) of Homo sapiens (Human).